A 92-amino-acid polypeptide reads, in one-letter code: Small ribosomal subunit protein uS19 (92 aa).

This sequence belongs to the universal ribosomal protein uS19 family.

In terms of biological role, protein S19 forms a complex with S13 that binds strongly to the 16S ribosomal RNA. This is Small ribosomal subunit protein uS19 from Trichlorobacter lovleyi (strain ATCC BAA-1151 / DSM 17278 / SZ) (Geobacter lovleyi).